A 185-amino-acid polypeptide reads, in one-letter code: Probable chorismate pyruvate-lyase 2 (185 aa).

Substrate-binding residues include Arg80, Leu118, and Glu170.

This sequence belongs to the UbiC family.

The protein localises to the cytoplasm. The enzyme catalyses chorismate = 4-hydroxybenzoate + pyruvate. It functions in the pathway cofactor biosynthesis; ubiquinone biosynthesis. Removes the pyruvyl group from chorismate, with concomitant aromatization of the ring, to provide 4-hydroxybenzoate (4HB) for the ubiquinone pathway. The protein is Probable chorismate pyruvate-lyase 2 of Pseudomonas entomophila (strain L48).